A 589-amino-acid polypeptide reads, in one-letter code: MAFQRAEGMSIIQALAMTVAEIPVFLYTTFGQSTFSQLRLSPGLRKVLFATALGTVALALAAHQLKRRKHKKKQITADNGGLKLGGVPGSVLPVRRSSSAKKGYSRSRVQSPSSKSNDTLSGISSLDPSKHSSSSHSLASVVAVNSSSINAAPAGPWESPEMDETLEEGDSNAENLYIQGMELFEEALHKWEQALNVGQRCRSNTPASQVNDLLNQSCSEGLSEDSQSGHFAGKLEALLYRAYNLQEEFGTSIPPDDLLMDLEGSLIFPLVESRRALMMDDEGSSTSEDSFFSAAELFETLQLNEVPFLPTKPAAAYEEALKLVHTGEVACRTLRTELLGCYNDQDFLAKLHCVRQAFEVLLLDDGNQLFFGEVGKQMITGLMQKAEKNPKGFLENYEEMLRYALKQDTWATTQRELKGRGVVCMNFFDIALDFILMDAFEDLESPPSSVLAVLRNRWLSDSFKETALATACWSVLKAKRRLLMVPDGFISHFYSVSEHVSPVLAYGFLGPKEHLTEVCNFFKNQIVQYLKDMFDLDNVRYSTIQSLAEDILHLSRRRSDILLGYLGVETVREMNGAVPVQTTEAELDL.

Transmembrane regions (helical) follow at residues 11 to 31 (IIQA…TTFG) and 42 to 62 (PGLR…ALAA). The interval 87 to 134 (VPGSVLPVRRSSSAKKGYSRSRVQSPSSKSNDTLSGISSLDPSKHSSS) is disordered. 2 stretches are compositionally biased toward low complexity: residues 106 to 116 (RSRVQSPSSKS) and 123 to 134 (ISSLDPSKHSSS).

Belongs to the mitoguardin family. As to quaternary structure, homodimer and heterodimer; forms heterodimers with miga1.

The protein localises to the mitochondrion outer membrane. Regulator of mitochondrial fusion: acts by forming homo- and heterodimers at the mitochondrial outer membrane and facilitating the formation of pld6/MitoPLD dimers. May act by regulating phospholipid metabolism via pld6/MitoPLD. This chain is Mitoguardin 2, found in Xenopus laevis (African clawed frog).